The primary structure comprises 271 residues: Dipeptidyl-peptidase 6 (271 aa).

SH3b domains lie at 1–64 (MNAI…LFDD) and 72–140 (QKAQ…HPKI). The region spanning 148 to 268 (HAFRENVVQT…DLATTITAIG (121 aa)) is the NlpC/P60 domain. C178 acts as the Nucleophile in catalysis. The active-site Proton acceptor is H224. Residue H236 is part of the active site.

It belongs to the peptidase C40 family.

It localises to the cytoplasm. Involved in cell sporulation. Hydrolyzes gamma-D-Glu-L-(meso)A2pm linkages only in those peptide units that have a free N-terminal L-alanine. This is Dipeptidyl-peptidase 6 from Lysinibacillus sphaericus (Bacillus sphaericus).